A 27-amino-acid polypeptide reads, in one-letter code: Secretin (27 aa).

Residue valine 27 is modified to Valine amide.

Belongs to the glucagon family.

It localises to the secreted. Hormone involved in different processes, such as regulation of the pH of the duodenal content, food intake and water homeostasis. Exerts its biological effects by binding to secretin receptor (SCTR), a G-protein coupled receptor expressed in the basolateral domain of several cells. Acts as a key gastrointestinal hormone by regulating the pH of the duodenal content. Secreted by S cells of the duodenum in the crypts of Lieberkuehn and regulates the pH of the duodenum by (1) inhibiting the secretion of gastric acid from the parietal cells of the stomach and (2) stimulating the production of bicarbonate (NaHCO(3)) from the ductal cells of the pancreas. Production of bicarbonate is essential to neutralize the pH and ensure no damage is done to the small intestine by the gastric acid. In addition to regulating the pH of the duodenal content, plays a central role in diet induced thermogenesis: acts as a non-sympathetic brown fat (BAT) activator mediating prandial thermogenesis, which consequentially induces satiation. Mechanistically, secretin released by the gut after a meal binds to secretin receptor (SCTR) in brown adipocytes, activating brown fat thermogenesis by stimulating lipolysis, which is sensed in the brain and promotes satiation. Also able to stimulate lipolysis in white adipocytes. Also plays an important role in cellular osmoregulation: released into the systemic circulation in response to hyperosmolality and acts at different levels in the hypothalamus, pituitary and kidney to regulate water homeostasis. Also plays a role in the central nervous system, possibly by acting as a neuropeptide hormone: required for hippocampal synaptic function and neural progenitor cells maintenance. The polypeptide is Secretin (Canis lupus familiaris (Dog)).